The sequence spans 323 residues: Ferrochelatase (323 aa).

2 residues coordinate Fe cation: H196 and E277.

This sequence belongs to the ferrochelatase family.

It is found in the cytoplasm. It catalyses the reaction heme b + 2 H(+) = protoporphyrin IX + Fe(2+). It participates in porphyrin-containing compound metabolism; protoheme biosynthesis; protoheme from protoporphyrin-IX: step 1/1. In terms of biological role, catalyzes the ferrous insertion into protoporphyrin IX. This is Ferrochelatase from Haemophilus influenzae (strain 86-028NP).